Consider the following 593-residue polypeptide: MSTEAEPRVLREVVLSQLATGESRAYKMWLPPLTDPTPVNELVERDYQRRPLRFGLGIMDEPRRHRQEVWGVDVSAAGGNIAVGGAPQTGKSTFLQTLVVSAAATHTPRQVQFYCVDLGGGGLMYLEDLPHVGGVATRAEPDRVNRVVAEVKAVLRAREQVFKQYRVGSIASYREMRDDPSNPASQDPFGDVFLVIDGWPAFVAEFPDLEPAVQDIAGQGLAYGVHVIITTPRWTELKSRVRDYLGTKIEFRLGDVNETQIDRITREIPANRPGRAVSLEKHHLMMGVPRLDGVHSADNIVEAISSAVQQIAGRHTDQAPQVRVLPERIYLHQLDPNPPGPDSDYRTRWQVPLGVRESDLTVAYNQMHLTPHLLIFGAPKSGKTRIAHAVAQAICKRNSPQQVRFMLADYRSGLLDAVPQSHLLDAGAINRNSATLEEAIKALAVNLKKRLPPPDLTTAQLRARSWWSGPDVVLLVDDWHMVTAAAGMVSPMAPLGPLLPAAADIGLHVIVTCQMSMAHRATMDKFVGAAYGAGSPTLFLSGEKNDFPSRDIIVKKRPPGQAFLVGPDGKEVIQAAYVDPPEEEVFSPPSEGS.

2 consecutive FtsK domains span residues Arg-66 to Gln-260 and Gln-350 to Asp-546. ATP-binding positions include Gly-85–Ser-92 and Gly-377–Thr-384.

Part of the ESX-1 / type VII secretion system (T7SS), which is composed of cytosolic and membrane components. The ESX-1 membrane complex is composed of EccB1, EccCa1, EccCb1, EccD1 and EccE1.

Its subcellular location is the cytoplasm. Part of the ESX-1 / type VII specialized secretion system (T7SS), which exports several proteins including EsxA and EsxB. Plays a role in DNA conjugation, in both donor and recipient strains. In Mycolicibacterium smegmatis (strain MKD8) (Mycobacterium smegmatis), this protein is ESX-1 secretion system protein EccCb1 (eccCb1).